The sequence spans 102 residues: Small ribosomal subunit protein uS10 (102 aa).

It belongs to the universal ribosomal protein uS10 family. As to quaternary structure, part of the 30S ribosomal subunit.

Functionally, involved in the binding of tRNA to the ribosomes. The sequence is that of Small ribosomal subunit protein uS10 from Sulfurisphaera tokodaii (strain DSM 16993 / JCM 10545 / NBRC 100140 / 7) (Sulfolobus tokodaii).